Here is an 895-residue protein sequence, read N- to C-terminus: Putative endoplasmic reticulum metallopeptidase 1-B (895 aa).

The segment at 1 to 27 is disordered; the sequence is MSTGIRRRHADEKKNILEKESLQNDET. The Cytoplasmic portion of the chain corresponds to 1-39; sequence MSTGIRRRHADEKKNILEKESLQNDETQREMEKDISLLR. Residues 9 to 27 show a composition bias toward basic and acidic residues; that stretch reads HADEKKNILEKESLQNDET. A helical transmembrane segment spans residues 40-60; that stretch reads PAHWNFIGLFFLVLIIGTTFL. The Lumenal portion of the chain corresponds to 61 to 374; that stretch reads HKCLPEPKDP…KPAEYADRKT (314 aa). Asn-156 carries N-linked (GlcNAc...) asparagine glycosylation. Zn(2+) is bound by residues His-180 and Asp-192. Catalysis depends on Glu-226, which acts as the Proton acceptor. Residues Glu-227, Glu-253, and His-329 each contribute to the Zn(2+) site. The helical transmembrane segment at 375–395 threads the bilayer; that stretch reads VFFDFLGLFVIIYPLSIAHLV. The Cytoplasmic portion of the chain corresponds to 396–424; sequence NMLTICTVIALMSHRFYSKTFITFLALRD. A helical membrane pass occupies residues 425–445; the sequence is YVLTILTIALVLKAMTFMSLF. Residues 446-457 are Lumenal-facing; that stretch reads TYGALRWYTRHW. Residues 458-478 traverse the membrane as a helical segment; sequence LALVAYGLPSVWAGISVQGLL. Residues 479–489 are Cytoplasmic-facing; it reads TARLAPKAREE. A helical transmembrane segment spans residues 490–512; the sequence is YGSTLELIHLTLISGILLAFTYY. The Lumenal portion of the chain corresponds to 513–515; that stretch reads DIA. A helical membrane pass occupies residues 516-538; the sequence is SGFLFALLLVPAIKSIITYFGAW. The Cytoplasmic segment spans residues 539–553; it reads PTCPTFNTILTLILS. A helical membrane pass occupies residues 554 to 574; it reads FPGCAMAIYTTEMLLSIFIPI. Residues 575-584 are Lumenal-facing; it reads MGRSSYNPEP. The chain crosses the membrane as a helical span at residues 585-605; sequence AVSFFVAFSAGCIVLSLGGLV. The Cytoplasmic portion of the chain corresponds to 606 to 619; sequence AKSRNSRSSNEAGL. Residues 620–640 form a helical membrane-spanning segment; it reads LELIYNILGVLLVTLTILYVF. At 641–895 the chain is on the lumenal side; that stretch reads SSFWPSPYRF…WNVDQVYKYF (255 aa). Residues Asn-679 and Asn-796 are each glycosylated (N-linked (GlcNAc...) asparagine).

It belongs to the peptidase M28 family. Zn(2+) is required as a cofactor.

Its subcellular location is the endoplasmic reticulum membrane. In Caenorhabditis elegans, this protein is Putative endoplasmic reticulum metallopeptidase 1-B.